The primary structure comprises 390 residues: Acetate kinase (390 aa).

Asn10 lines the Mg(2+) pocket. Lys17 is a binding site for ATP. Arg89 is a substrate binding site. Residue Asp146 is the Proton donor/acceptor of the active site. ATP-binding positions include 204-208 (HLGNG), 278-280 (DMR), and 323-327 (GIGEN). Glu376 lines the Mg(2+) pocket.

The protein belongs to the acetokinase family. Homodimer. Mg(2+) serves as cofactor. Mn(2+) is required as a cofactor.

The protein localises to the cytoplasm. It catalyses the reaction acetate + ATP = acetyl phosphate + ADP. It participates in metabolic intermediate biosynthesis; acetyl-CoA biosynthesis; acetyl-CoA from acetate: step 1/2. In terms of biological role, catalyzes the formation of acetyl phosphate from acetate and ATP. Can also catalyze the reverse reaction. The polypeptide is Acetate kinase (Mycoplasma pneumoniae (strain ATCC 29342 / M129 / Subtype 1) (Mycoplasmoides pneumoniae)).